A 129-amino-acid polypeptide reads, in one-letter code: Small ribosomal subunit protein uS11 (129 aa).

This sequence belongs to the universal ribosomal protein uS11 family. Part of the 30S ribosomal subunit. Interacts with proteins S7 and S18. Binds to IF-3.

In terms of biological role, located on the platform of the 30S subunit, it bridges several disparate RNA helices of the 16S rRNA. Forms part of the Shine-Dalgarno cleft in the 70S ribosome. This chain is Small ribosomal subunit protein uS11, found in Hamiltonella defensa subsp. Acyrthosiphon pisum (strain 5AT).